We begin with the raw amino-acid sequence, 389 residues long: S-adenosylmethionine synthase (389 aa).

ATP is bound at residue His-15. Asp-17 is a binding site for Mg(2+). Residue Glu-43 coordinates K(+). The L-methionine site is built by Glu-56 and Gln-99. The flexible loop stretch occupies residues 99–109 (QSPDIAQGVNE). Residues 166 to 168 (DAK), 234 to 235 (RF), Asp-243, 249 to 250 (RK), Ala-266, and Lys-270 each bind ATP. Asp-243 is a binding site for L-methionine. An L-methionine-binding site is contributed by Lys-274.

This sequence belongs to the AdoMet synthase family. As to quaternary structure, homotetramer; dimer of dimers. Mg(2+) is required as a cofactor. K(+) serves as cofactor.

The protein resides in the cytoplasm. It catalyses the reaction L-methionine + ATP + H2O = S-adenosyl-L-methionine + phosphate + diphosphate. Its pathway is amino-acid biosynthesis; S-adenosyl-L-methionine biosynthesis; S-adenosyl-L-methionine from L-methionine: step 1/1. In terms of biological role, catalyzes the formation of S-adenosylmethionine (AdoMet) from methionine and ATP. The overall synthetic reaction is composed of two sequential steps, AdoMet formation and the subsequent tripolyphosphate hydrolysis which occurs prior to release of AdoMet from the enzyme. In Neisseria meningitidis serogroup C (strain 053442), this protein is S-adenosylmethionine synthase.